Here is a 315-residue protein sequence, read N- to C-terminus: Homoserine kinase (315 aa).

ATP is bound at residue 97–107 (PPARGLGSSAT).

The protein belongs to the GHMP kinase family. Homoserine kinase subfamily.

The protein localises to the cytoplasm. It carries out the reaction L-homoserine + ATP = O-phospho-L-homoserine + ADP + H(+). It participates in amino-acid biosynthesis; L-threonine biosynthesis; L-threonine from L-aspartate: step 4/5. Catalyzes the ATP-dependent phosphorylation of L-homoserine to L-homoserine phosphate. This Prochlorococcus marinus (strain MIT 9312) protein is Homoserine kinase.